The following is a 260-amino-acid chain: Hydroxyethylthiazole kinase (260 aa).

Methionine 49 serves as a coordination point for substrate. ATP contacts are provided by arginine 124 and threonine 170. Position 197 (glycine 197) interacts with substrate.

It belongs to the Thz kinase family. Mg(2+) serves as cofactor.

The catalysed reaction is 5-(2-hydroxyethyl)-4-methylthiazole + ATP = 4-methyl-5-(2-phosphooxyethyl)-thiazole + ADP + H(+). It functions in the pathway cofactor biosynthesis; thiamine diphosphate biosynthesis; 4-methyl-5-(2-phosphoethyl)-thiazole from 5-(2-hydroxyethyl)-4-methylthiazole: step 1/1. Functionally, catalyzes the phosphorylation of the hydroxyl group of 4-methyl-5-beta-hydroxyethylthiazole (THZ). The sequence is that of Hydroxyethylthiazole kinase from Yersinia enterocolitica serotype O:8 / biotype 1B (strain NCTC 13174 / 8081).